The following is a 129-amino-acid chain: Procyclic form-specific polypeptide A-beta (129 aa).

The signal sequence occupies residues 1–27 (MAPRSLYLLAVLLFSANLFAGVGFAAA). A disordered region spans residues 27 to 111 (AAEGPEDKGL…PEPEPGAATL (85 aa)). Residues 53–104 (DDTNGTDPDPEPEPEPEPEPEPEPEPEPEPEPEPEPEPEPEPEPEPEPEPEP) are compositionally biased toward acidic residues. Asn56 carries an N-linked (GlcNAc...) asparagine glycan. Repeat copies occupy residues 59–60 (DP), 61–62 (DP), 63–64 (EP), 65–66 (EP), 67–68 (EP), 69–70 (EP), 71–72 (EP), 73–74 (EP), 75–76 (EP), 77–78 (EP), 79–80 (EP), 81–82 (EP), 83–84 (EP), 85–86 (EP), 87–88 (EP), 89–90 (EP), 91–92 (EP), 93–94 (EP), 95–96 (EP), 97–98 (EP), 99–100 (EP), 101–102 (EP), 103–104 (EP), and 105–106 (EP). A 24 X 2 AA tandem repeats of [DE]-P region spans residues 59–106 (DPDPEPEPEPEPEPEPEPEPEPEPEPEPEPEPEPEPEPEPEPEPEPEP). Gly107 carries GPI-anchor amidated glycine lipidation. The propeptide occupies 108–129 (AATLKSVALPFAIAAVGLVAAF).

It localises to the cell membrane. In terms of biological role, major surface antigen of procyclic forms. This is Procyclic form-specific polypeptide A-beta (PARPA-BETA) from Trypanosoma brucei brucei.